We begin with the raw amino-acid sequence, 369 residues long: Allantoicase (369 aa).

Positions 341-369 are disordered; that stretch reads PDSKNNNNNNNNNNNNNTSNSFKTSDRQQ. The span at 345-357 shows a compositional bias: low complexity; sequence NNNNNNNNNNNNN.

It belongs to the allantoicase family.

It carries out the reaction allantoate + H2O = (S)-ureidoglycolate + urea. It functions in the pathway nitrogen metabolism; (S)-allantoin degradation; (S)-ureidoglycolate from allantoate (aminidohydrolase route): step 1/1. Functionally, utilization of purines as secondary nitrogen sources, when primary sources are limiting. This Dictyostelium discoideum (Social amoeba) protein is Allantoicase (allC).